The sequence spans 404 residues: Phosphopentomutase (404 aa).

Mn(2+) contacts are provided by D10, D303, H308, D344, H345, and H356.

It belongs to the phosphopentomutase family. Requires Mn(2+) as cofactor.

The protein resides in the cytoplasm. The catalysed reaction is 2-deoxy-alpha-D-ribose 1-phosphate = 2-deoxy-D-ribose 5-phosphate. It carries out the reaction alpha-D-ribose 1-phosphate = D-ribose 5-phosphate. It participates in carbohydrate degradation; 2-deoxy-D-ribose 1-phosphate degradation; D-glyceraldehyde 3-phosphate and acetaldehyde from 2-deoxy-alpha-D-ribose 1-phosphate: step 1/2. Its function is as follows. Isomerase that catalyzes the conversion of deoxy-ribose 1-phosphate (dRib-1-P) and ribose 1-phosphate (Rib-1-P) to deoxy-ribose 5-phosphate (dRib-5-P) and ribose 5-phosphate (Rib-5-P), respectively. In Shewanella sp. (strain ANA-3), this protein is Phosphopentomutase.